Here is a 135-residue protein sequence, read N- to C-terminus: Fluoride-specific ion channel FluC 2 (135 aa).

Transmembrane regions (helical) follow at residues 5–25, 36–56, 68–88, and 100–120; these read VLAAVAAGGALGALARAGLLA, WGTVLVNVLGCALIGVLMETL, PFLGVGVLGGFTTFSAAITDA, and ALLAIAANLIGALLAVSAAAG. G76 and T79 together coordinate Na(+).

This sequence belongs to the fluoride channel Fluc/FEX (TC 1.A.43) family.

It localises to the cell membrane. The catalysed reaction is fluoride(in) = fluoride(out). Na(+) is not transported, but it plays an essential structural role and its presence is essential for fluoride channel function. Functionally, fluoride-specific ion channel. Important for reducing fluoride concentration in the cell, thus reducing its toxicity. The chain is Fluoride-specific ion channel FluC 2 from Thermobifida fusca (strain YX).